A 35-amino-acid chain; its full sequence is Photosystem II reaction center protein Psb30 (35 aa).

Residues Val-7–Leu-27 traverse the membrane as a helical segment.

It belongs to the Psb30/Ycf12 family. PSII is composed of 1 copy each of membrane proteins PsbA, PsbB, PsbC, PsbD, PsbE, PsbF, PsbH, PsbI, PsbJ, PsbK, PsbL, PsbM, PsbT, PsbX, PsbY, PsbZ, Psb30/Ycf12, peripheral proteins PsbO, CyanoQ (PsbQ), PsbU, PsbV and a large number of cofactors. It forms dimeric complexes.

Its subcellular location is the cellular thylakoid membrane. A core subunit of photosystem II (PSII), probably helps stabilize the reaction center. This Synechococcus sp. (strain JA-2-3B'a(2-13)) (Cyanobacteria bacterium Yellowstone B-Prime) protein is Photosystem II reaction center protein Psb30.